Consider the following 469-residue polypeptide: tRNA modification GTPase MnmE (469 aa).

Arginine 38, glutamate 95, and arginine 134 together coordinate (6S)-5-formyl-5,6,7,8-tetrahydrofolate. In terms of domain architecture, TrmE-type G spans glycine 230–aspartate 392. GTP contacts are provided by residues asparagine 240–serine 245, serine 259–threonine 265, and aspartate 284–glycine 287. Mg(2+) contacts are provided by serine 244 and threonine 265. Residue lysine 468 coordinates (6S)-5-formyl-5,6,7,8-tetrahydrofolate.

It belongs to the TRAFAC class TrmE-Era-EngA-EngB-Septin-like GTPase superfamily. TrmE GTPase family. Homodimer. Heterotetramer of two MnmE and two MnmG subunits. K(+) is required as a cofactor.

The protein localises to the cytoplasm. Functionally, exhibits a very high intrinsic GTPase hydrolysis rate. Involved in the addition of a carboxymethylaminomethyl (cmnm) group at the wobble position (U34) of certain tRNAs, forming tRNA-cmnm(5)s(2)U34. This is tRNA modification GTPase MnmE from Halorhodospira halophila (strain DSM 244 / SL1) (Ectothiorhodospira halophila (strain DSM 244 / SL1)).